A 95-amino-acid chain; its full sequence is Large ribosomal subunit protein uL23 (95 aa).

It belongs to the universal ribosomal protein uL23 family. As to quaternary structure, part of the 50S ribosomal subunit. Contacts protein L29, and trigger factor when it is bound to the ribosome.

Its function is as follows. One of the early assembly proteins it binds 23S rRNA. One of the proteins that surrounds the polypeptide exit tunnel on the outside of the ribosome. Forms the main docking site for trigger factor binding to the ribosome. This is Large ribosomal subunit protein uL23 from Desulfatibacillum aliphaticivorans.